We begin with the raw amino-acid sequence, 266 residues long: Putative carbamate hydrolase RutD (266 aa).

The region spanning 14-115 is the AB hydrolase-1 domain; that stretch reads PVVVLISGLG…TVLVSVNGWL (102 aa).

This sequence belongs to the AB hydrolase superfamily. Hydrolase RutD family.

It carries out the reaction carbamate + 2 H(+) = NH4(+) + CO2. Functionally, involved in pyrimidine catabolism. May facilitate the hydrolysis of carbamate, a reaction that can also occur spontaneously. The polypeptide is Putative carbamate hydrolase RutD (Escherichia coli O9:H4 (strain HS)).